Consider the following 315-residue polypeptide: CAAX prenyl protease 2 (315 aa).

Over 1 to 3 (MLQ) the chain is Lumenal. Residues 4–23 (FSTFLVLLYISISYVLPLYA) traverse the membrane as a helical segment. At 24 to 44 (TSQPEGSKRDNPRTIKSRMQK) the chain is on the cytoplasmic side. Residues 45 to 65 (LTIMLISNLFLVPFLQSQLSS) form a helical membrane-spanning segment. The Lumenal segment spans residues 66–74 (TTSHISFKD). The chain crosses the membrane as a helical span at residues 75–95 (AFLGLGIIPGYYAALPNPWQF). The Cytoplasmic segment spans residues 96–105 (SQFVKDLTKC). A helical transmembrane segment spans residues 106 to 126 (VAMLLTLYCGPVLDFVLYHLL). The Lumenal segment spans residues 127–148 (NPKSSILEDFYHEFLNIWSFRN). Residues 149–169 (FIFAPITEEIFYTSMLLTTYL) form a helical membrane-spanning segment. Catalysis depends on proton donor/acceptor residues E156 and H194. Residues 170–208 (NLIPHSQLSYQQLFWQPSLFFGLAHAHHAYEQLQEGSMT) lie on the Cytoplasmic side of the membrane. A helical membrane pass occupies residues 209–229 (TVSILLTTCFQILYTTLFGGL). Residues 230–237 (TKFVFVRT) lie on the Lumenal side of the membrane. A helical membrane pass occupies residues 238 to 258 (GGNLWCCIILHALCNIMGFPG). Residues 259–275 (PSRLNLHFTVVDKKAGR) lie on the Cytoplasmic side of the membrane. Residues 276–296 (ISKLVSIWNKCYFALLVLGLI) traverse the membrane as a helical segment. Topologically, residues 297-315 (SLKDTLQTLVGTPGYRITL) are lumenal.

The protein belongs to the peptidase U48 family.

It localises to the endoplasmic reticulum membrane. It catalyses the reaction Hydrolyzes the peptide bond -P2-(S-farnesyl or geranylgeranyl)C-P1'-P2'-P3'-COOH where P1' and P2' are amino acids with aliphatic sidechains and P3' is any C-terminal residue.. Protease involved in the processing of a variety of prenylated proteins containing the C-terminal CAAX motif, where C is a cysteine modified with an isoprenoid lipid, A is an aliphatic amino acid and X is any C-terminal amino acid. Proteolytically removes the C-terminal three residues of farnesylated proteins, leaving the prenylated cysteine as the new C-terminus. Target proteins include the a-factor mating pheromone and RAS. Its substrate specificity is overlapping but distinct with that of STE24. The polypeptide is CAAX prenyl protease 2 (RCE1) (Saccharomyces cerevisiae (strain ATCC 204508 / S288c) (Baker's yeast)).